The primary structure comprises 293 residues: 33 kDa chaperonin (293 aa).

Disulfide bonds link Cys237–Cys239 and Cys271–Cys274.

It belongs to the HSP33 family. Under oxidizing conditions two disulfide bonds are formed involving the reactive cysteines. Under reducing conditions zinc is bound to the reactive cysteines and the protein is inactive.

It is found in the cytoplasm. In terms of biological role, redox regulated molecular chaperone. Protects both thermally unfolding and oxidatively damaged proteins from irreversible aggregation. Plays an important role in the bacterial defense system toward oxidative stress. This is 33 kDa chaperonin from Haemophilus influenzae (strain 86-028NP).